The sequence spans 156 residues: Small ribosomal subunit protein uS7 (156 aa).

The protein belongs to the universal ribosomal protein uS7 family. As to quaternary structure, part of the 30S ribosomal subunit. Contacts proteins S9 and S11.

Functionally, one of the primary rRNA binding proteins, it binds directly to 16S rRNA where it nucleates assembly of the head domain of the 30S subunit. Is located at the subunit interface close to the decoding center, probably blocks exit of the E-site tRNA. In Streptococcus pyogenes serotype M1, this protein is Small ribosomal subunit protein uS7.